The sequence spans 239 residues: IkB-like protein (239 aa).

ANK repeat units lie at residues 48–77 (NKITVFMLICIYGRLDFLRFLFKQESYPGE), 87–116 (DGNSAWHYLAEKNNHLLLEEVLDYFGKNGI), 124–153 (NGVTPIMKAAMRGRTLSVLSLLKYGANPNR), and 158–187 (KGFTTWDWAVFTGHADLVKTLNKGYQKPLF). Positions 81 to 87 (HYRRDKD) match the Nuclear localization signal motif. The Nuclear localization signal signature appears at 203 to 214 (KKKPKIIITGCE). The short motif at 206 to 213 (PKIIITGC) is the PxIxITxC motif; Interaction with host PPP3CA element. The short motif at 228-231 (FLCV) is the FLCV motif element.

Belongs to the asfivirus A238L family. Interacts with host PPIA. Interacts with host PPP3CA/Calcineurin. Interacts with host RELA/p65; interaction of the 32 kDa form with host RELA results in the formation of a stable complex with NF-kappa-B. Interacts with host PPP3R1. Interacts with host EP300; this interaction inhibits the association of host EP300 with host RELA, JUN and NFATC2. In terms of processing, the protein exists in a 28 kDa and a 32 kDa form, probably due to post-translational modifications which are neither phosphorylation, nor sumoylation.

Its subcellular location is the host nucleus. It is found in the host cytoplasm. In terms of biological role, ikB-like protein that inhibits the binding of NF-kappa-B to DNA, thereby downregulating pro-inflammatory cytokine production. Forms a heterodimer with the NF-kappa-B subunit RELA/p65 and prevents the activation of the NF-kappa-B transcription factor. Inhibits calcineurin function, which is required for the induction of nuclear factor of activated T cells (NFAT)-dependent immune response genes. Prevents the binding of substrates to calcineurin without affecting the phosphatase activity. Does not contain the serine residues that are phosphorylated by host IkB kinase and thus is not degraded following stimulation of the NFkB pathway. This is IkB-like protein (A238L) from Ornithodoros (relapsing fever ticks).